A 254-amino-acid polypeptide reads, in one-letter code: Acetylglutamate kinase (254 aa).

Substrate contacts are provided by residues 40–41 (GG), R62, and N158.

Belongs to the acetylglutamate kinase family. ArgB subfamily.

The protein localises to the cytoplasm. The enzyme catalyses N-acetyl-L-glutamate + ATP = N-acetyl-L-glutamyl 5-phosphate + ADP. The protein operates within amino-acid biosynthesis; L-arginine biosynthesis; N(2)-acetyl-L-ornithine from L-glutamate: step 2/4. Its function is as follows. Catalyzes the ATP-dependent phosphorylation of N-acetyl-L-glutamate. The sequence is that of Acetylglutamate kinase from Chloroflexus aggregans (strain MD-66 / DSM 9485).